A 118-amino-acid chain; its full sequence is Sarafotoxin-i1 (118 aa).

The N-terminal stretch at methionine 1–glycine 23 is a signal peptide. A propeptide spanning residues lysine 24–leucine 84 is cleaved from the precursor. 2 disulfides stabilise this stretch: cysteine 85–cysteine 99 and cysteine 87–cysteine 95. The propeptide occupies proline 112–serine 118.

Belongs to the endothelin/sarafotoxin family. Different length molecules ranging from 15 (85-99) to 30 amino acids (85-114) have been found in the venom. In terms of tissue distribution, expressed by the venom gland.

The protein localises to the secreted. Its function is as follows. Vasoconstrictor activity. These toxins cause cardiac arrest probably as a result of coronary vasospasm. Sarafotoxin-i3: vasoconstrictor activity. Causes cardiac arrest probably as a result of coronary vasospasm. Displays low agonistic activities towards endothelin-2 receptor (EDNRB) (displays affinity in the micromolar range). This Atractaspis irregularis (Variable burrowing asp) protein is Sarafotoxin-i1.